A 256-amino-acid chain; its full sequence is Thiazole synthase (256 aa).

The active-site Schiff-base intermediate with DXP is the Lys-98. Residues Gly-159, 185 to 186 (AG), and 207 to 208 (NT) each bind 1-deoxy-D-xylulose 5-phosphate.

This sequence belongs to the ThiG family. As to quaternary structure, homotetramer. Forms heterodimers with either ThiH or ThiS.

The protein localises to the cytoplasm. The enzyme catalyses [ThiS sulfur-carrier protein]-C-terminal-Gly-aminoethanethioate + 2-iminoacetate + 1-deoxy-D-xylulose 5-phosphate = [ThiS sulfur-carrier protein]-C-terminal Gly-Gly + 2-[(2R,5Z)-2-carboxy-4-methylthiazol-5(2H)-ylidene]ethyl phosphate + 2 H2O + H(+). Its pathway is cofactor biosynthesis; thiamine diphosphate biosynthesis. Functionally, catalyzes the rearrangement of 1-deoxy-D-xylulose 5-phosphate (DXP) to produce the thiazole phosphate moiety of thiamine. Sulfur is provided by the thiocarboxylate moiety of the carrier protein ThiS. In vitro, sulfur can be provided by H(2)S. This Aliivibrio fischeri (strain ATCC 700601 / ES114) (Vibrio fischeri) protein is Thiazole synthase.